Consider the following 282-residue polypeptide: Bifunctional protein FolD (282 aa).

NADP(+) is bound by residues 166–168 (GRS) and S191.

This sequence belongs to the tetrahydrofolate dehydrogenase/cyclohydrolase family. Homodimer.

The enzyme catalyses (6R)-5,10-methylene-5,6,7,8-tetrahydrofolate + NADP(+) = (6R)-5,10-methenyltetrahydrofolate + NADPH. It carries out the reaction (6R)-5,10-methenyltetrahydrofolate + H2O = (6R)-10-formyltetrahydrofolate + H(+). The protein operates within one-carbon metabolism; tetrahydrofolate interconversion. In terms of biological role, catalyzes the oxidation of 5,10-methylenetetrahydrofolate to 5,10-methenyltetrahydrofolate and then the hydrolysis of 5,10-methenyltetrahydrofolate to 10-formyltetrahydrofolate. The chain is Bifunctional protein FolD from Acidovorax ebreus (strain TPSY) (Diaphorobacter sp. (strain TPSY)).